The primary structure comprises 308 residues: Apolipoprotein E (308 aa).

The signal sequence occupies residues 1–18 (MKFLWAALVVTLLAGCRA). 8 repeat units span residues 75-96 (LLIE…KQVG), 97-118 (PIAQ…ARLE), 119-140 (SDME…AALG), 141-162 (QNTD…KRLL), 163-184 (RDAE…EAAE), 185-206 (RGVS…LQAI), 207-224 (PPSQ…QKVR), and 225-246 (GRLE…DQME). Residues 75–246 (LLIEETMKEV…RLDDMRDQME (172 aa)) are 8 X 22 AA approximate tandem repeats. The segment at 153 to 163 (HLRKLRKRLLR) is LDL and other lipoprotein receptors binding. 157 to 160 (LRKR) contacts heparin. The lipid-binding and lipoprotein association stretch occupies residues 205-281 (AIPPSQQLRE…SWFEPLVQDM (77 aa)). Position 220 to 227 (220 to 227 (GQKVRGRL)) interacts with heparin. The homooligomerization stretch occupies residues 257-308 (SQVRLQAEAFQTRLKSWFEPLVQDMQRQWASLVEKVQSTLGISPSTKPSKTK). The interval 269–281 (RLKSWFEPLVQDM) is specificity for association with VLDL.

It belongs to the apolipoprotein A1/A4/E family. As to quaternary structure, homotetramer. May interact with ABCA1; functionally associated with ABCA1 in the biogenesis of HDLs. May interact with APP/A4 amyloid-beta peptide; the interaction is extremely stable in vitro but its physiological significance is unclear. May interact with MAPT. May interact with MAP2. In the cerebrospinal fluid, interacts with secreted SORL1. Interacts with PMEL; this allows the loading of PMEL luminal fragment on ILVs to induce fibril nucleation. APOE exists as multiple glycosylated and sialylated glycoforms within cells and in plasma. The extent of glycosylation and sialylation are tissue and context specific. Post-translationally, glycated in plasma VLDL. In terms of processing, phosphorylated by FAM20C in the extracellular medium.

The protein resides in the secreted. It is found in the extracellular space. The protein localises to the extracellular matrix. It localises to the extracellular vesicle. Its subcellular location is the endosome. The protein resides in the multivesicular body. Its function is as follows. APOE is an apolipoprotein, a protein associating with lipid particles, that mainly functions in lipoprotein-mediated lipid transport between organs via the plasma and interstitial fluids. APOE is a core component of plasma lipoproteins and is involved in their production, conversion and clearance. Apolipoproteins are amphipathic molecules that interact both with lipids of the lipoprotein particle core and the aqueous environment of the plasma. As such, APOE associates with chylomicrons, chylomicron remnants, very low density lipoproteins (VLDL) and intermediate density lipoproteins (IDL) but shows a preferential binding to high-density lipoproteins (HDL). It also binds a wide range of cellular receptors including the LDL receptor/LDLR and the very low-density lipoprotein receptor/VLDLR that mediate the cellular uptake of the APOE-containing lipoprotein particles. Finally, APOE also has a heparin-binding activity and binds heparan-sulfate proteoglycans on the surface of cells, a property that supports the capture and the receptor-mediated uptake of APOE-containing lipoproteins by cells. In Pteropus vampyrus (Large flying fox), this protein is Apolipoprotein E (APOE).